The following is a 357-amino-acid chain: MQSVQSTSFCLRKQCLCLTFLLLHLLGQVAATQRCPPQCPGRCPATPPTCAPGVRAVLDGCSCCLVCARQRGESCSDLEPCDESSGLYCDRSADPSNQTGICTAVEGDNCVFDGVIYRSGEKFQPSCKFQCTCRDGQIGCVPRCQLDVLLPEPNCPAPRKVEVPGECCEKWICGPDEEDSLGGLTLAAYRPEATLGVEVSDSSVNCIEQTTEWTACSKSCGMGFSTRVTNRNRQCEMLKQTRLCMVRPCEQEPEQPTDKKGKKCLRTKKSLKAIHLQFKNCTSLHTYKPRFCGVCSDGRCCTPHNTKTIQAEFQCSPGQIVKKPVMVIGTCTCHTNCPKNNEAFLQELELKTTRGKM.

An N-terminal signal peptide occupies residues 1–31 (MQSVQSTSFCLRKQCLCLTFLLLHLLGQVAA). Residues 32–105 (TQRCPPQCPG…SNQTGICTAV (74 aa)) form the IGFBP N-terminal domain. 6 disulfide bridges follow: cysteine 35–cysteine 61, cysteine 39–cysteine 63, cysteine 43–cysteine 64, cysteine 50–cysteine 67, cysteine 75–cysteine 89, and cysteine 81–cysteine 102. A glycan (N-linked (GlcNAc...) asparagine) is linked at asparagine 97. The VWFC domain occupies 108-174 (DNCVFDGVIY…GECCEKWICG (67 aa)). Residues 205 to 250 (NCIEQTTEWTACSKSCGMGFSTRVTNRNRQCEMLKQTRLCMVRPCE) enclose the TSP type-1 domain. A lipid anchor (S-palmitoyl cysteine) is attached at cysteine 244. 5 disulfides stabilise this stretch: cysteine 264–cysteine 301, cysteine 281–cysteine 315, cysteine 292–cysteine 331, cysteine 295–cysteine 333, and cysteine 300–cysteine 337. The CTCK domain maps to 264–338 (CLRTKKSLKA…GTCTCHTNCP (75 aa)). Asparagine 280 is a glycosylation site (N-linked (GlcNAc...) asparagine).

The protein belongs to the CCN family. As to quaternary structure, interacts with FBLN1. Interacts (via CTCK domain) with NOTCH1 (via the EGF-like repeat region). Interacts with GJA1/CX43. Interacts with ITGA5:ITGB1, ITGAV:ITGB3 and ITGAV:ITGB5. Interacts with ZDHHC22; the interaction may lead to CCN3 palmitoylation. May be palmitoylated on Cys-244, which is important for extracellular secretion. As to expression, expressed in endothelial cells (at protein level). Expressed in bone marrow and thymic cells.

It localises to the secreted. The protein resides in the cytoplasm. The protein localises to the cell junction. It is found in the gap junction. Its function is as follows. Immediate-early protein playing a role in various cellular processes including proliferation, adhesion, migration, differentiation and survival. Acts by binding to integrins or membrane receptors such as NOTCH1. Essential regulator of hematopoietic stem and progenitor cell function. Inhibits myogenic differentiation through the activation of Notch-signaling pathway. Inhibits vascular smooth muscle cells proliferation by increasing expression of cell-cycle regulators such as CDKN2B or CDKN1A independently of TGFB1 signaling. Ligand of integrins ITGAV:ITGB3 and ITGA5:ITGB1, acts directly upon endothelial cells to stimulate pro-angiogenic activities and induces angiogenesis. In endothelial cells, supports cell adhesion, induces directed cell migration (chemotaxis) and promotes cell survival. Also plays a role in cutaneous wound healing acting as integrin receptor ligand. Supports skin fibroblast adhesion through ITGA5:ITGB1 and ITGA6:ITGB1 and induces fibroblast chemotaxis through ITGAV:ITGB5. Seems to enhance bFGF-induced DNA synthesis in fibroblasts. Involved in bone regeneration as a negative regulator. Enhances the articular chondrocytic phenotype, whereas it repressed the one representing endochondral ossification. Impairs pancreatic beta-cell function, inhibits beta-cell proliferation and insulin secretion. Plays a role as negative regulator of endothelial pro-inflammatory activation reducing monocyte adhesion, its anti-inflammatory effects occur secondary to the inhibition of NF-kappaB signaling pathway. Contributes to the control and coordination of inflammatory processes in atherosclerosis. Attenuates inflammatory pain through regulation of IL1B- and TNF-induced MMP9, MMP2 and CCL2 expression. Inhibits MMP9 expression through ITGB1 engagement. Brain osteoanabolic hormone. Drives osteogenesis in osteochondral skeletal stem cells. During lactation, maintains the maternal skeleton and viability of offspring. In Homo sapiens (Human), this protein is CCN family member 3.